The following is a 306-amino-acid chain: Large ribosomal subunit protein bL19m (306 aa).

Positions 34-43 (ENQEEQKKEA) are enriched in basic and acidic residues. The tract at residues 34–53 (ENQEEQKKEAPPTTPTSPVN) is disordered.

Belongs to the bacterial ribosomal protein bL19 family. In terms of assembly, component of the mitochondrial ribosome large subunit (39S) which comprises a 16S rRNA and about 50 distinct proteins.

Its subcellular location is the mitochondrion. This Drosophila melanogaster (Fruit fly) protein is Large ribosomal subunit protein bL19m (mRpL19).